A 154-amino-acid chain; its full sequence is S-protein homolog 12 (154 aa).

Positions 1-30 (MGTNKIPKTLNGNLVLILIITIMMVTHSHG) are cleaved as a signal peptide.

Belongs to the plant self-incompatibility (S1) protein family.

It localises to the secreted. The protein is S-protein homolog 12 of Arabidopsis thaliana (Mouse-ear cress).